A 367-amino-acid polypeptide reads, in one-letter code: uncharacterized protein (367 aa).

The helical transmembrane segment at 8 to 28 threads the bilayer; the sequence is VLIGTFVLAAILAVFGFIYWL.

The protein resides in the membrane. This is an uncharacterized protein from Bradyrhizobium diazoefficiens (strain JCM 10833 / BCRC 13528 / IAM 13628 / NBRC 14792 / USDA 110).